We begin with the raw amino-acid sequence, 210 residues long: MSVPTNRPGLFITLEGGDGVGKSTQAALLERWLLGLGRAVVRTREPGGTDLGAEIREIVLHRRGDIAPRAEALLYAADRAHHVATVVRPALERGEVVLQDRYLDSSVAYQGAGRVLDAGEVRELSLWAAEGLLPDLTILLDLDETTARARLGSARTRYDRLEAERSEFHARVRAAYLALAAEPQRFLVVDASRPVEEIAAEIRCRLDGRV.

Position 16–23 (16–23 (GGDGVGKS)) interacts with ATP.

It belongs to the thymidylate kinase family.

The catalysed reaction is dTMP + ATP = dTDP + ADP. Phosphorylation of dTMP to form dTDP in both de novo and salvage pathways of dTTP synthesis. This chain is Thymidylate kinase, found in Leifsonia xyli subsp. xyli (strain CTCB07).